We begin with the raw amino-acid sequence, 317 residues long: Protein CbxX, chromosomal (317 aa).

Residues 1 to 21 (MSAPETTAPLQPPAAPAASLP) are disordered. 85 to 92 (GNPGTGKT) provides a ligand contact to ATP.

It belongs to the CbxX/CfxQ family.

Seems to be necessary for the expression of RuBisCO. This is Protein CbxX, chromosomal (cbxXC) from Cupriavidus necator (strain ATCC 17699 / DSM 428 / KCTC 22496 / NCIMB 10442 / H16 / Stanier 337) (Ralstonia eutropha).